We begin with the raw amino-acid sequence, 703 residues long: Glycine--tRNA ligase beta subunit (703 aa).

This sequence belongs to the class-II aminoacyl-tRNA synthetase family. In terms of assembly, tetramer of two alpha and two beta subunits.

It is found in the cytoplasm. The enzyme catalyses tRNA(Gly) + glycine + ATP = glycyl-tRNA(Gly) + AMP + diphosphate. The protein is Glycine--tRNA ligase beta subunit of Myxococcus xanthus (strain DK1622).